The chain runs to 259 residues: Ferritin-2, chloroplastic (259 aa).

Residues 1–52 (MLLKLAPAFTLLNSHGENLSPMLSTSSQGFVLKNFSTKSRNGLLVVCASKGS) constitute a chloroplast transit peptide. The interval 53 to 85 (NTKPLTGVVFEPFEEVKKELMLVPTVPQVSLAR) is extension peptide (EP). Residues 86–239 (HKYSDQCEAA…EYVAQLRRVG (154 aa)) enclose the Ferritin-like diiron domain. 4 residues coordinate Fe cation: glutamate 103, glutamate 138, histidine 141, and glutamine 221.

The protein belongs to the ferritin family. In terms of assembly, oligomer of 24 subunits. There are two types of subunits: L (light) chain and H (heavy) chain. The major chain can be light or heavy, depending on the species and tissue type. The functional molecule forms a roughly spherical shell with a diameter of 12 nm and contains a central cavity into which the insoluble mineral iron core is deposited.

Its subcellular location is the plastid. It localises to the chloroplast. The catalysed reaction is 4 Fe(2+) + O2 + 4 H(+) = 4 Fe(3+) + 2 H2O. Stores iron in a soluble, non-toxic, readily available form. Important for iron homeostasis. Has ferroxidase activity. Iron is taken up in the ferrous form and deposited as ferric hydroxides after oxidation. This chain is Ferritin-2, chloroplastic (FER2), found in Nicotiana tabacum (Common tobacco).